The sequence spans 646 residues: Threonine--tRNA ligase (646 aa).

In terms of domain architecture, TGS spans M1–T63. The tract at residues D247–P544 is catalytic. Zn(2+) is bound by residues C344, H395, and H521.

Belongs to the class-II aminoacyl-tRNA synthetase family. As to quaternary structure, homodimer. The cofactor is Zn(2+).

It localises to the cytoplasm. It carries out the reaction tRNA(Thr) + L-threonine + ATP = L-threonyl-tRNA(Thr) + AMP + diphosphate + H(+). Catalyzes the attachment of threonine to tRNA(Thr) in a two-step reaction: L-threonine is first activated by ATP to form Thr-AMP and then transferred to the acceptor end of tRNA(Thr). Also edits incorrectly charged L-seryl-tRNA(Thr). The protein is Threonine--tRNA ligase of Cereibacter sphaeroides (strain ATCC 17025 / ATH 2.4.3) (Rhodobacter sphaeroides).